A 155-amino-acid polypeptide reads, in one-letter code: uncharacterized protein (155 aa).

A signal peptide spans 1-19; it reads MPLSKTLVQKLQQAGMAIA.

This is an uncharacterized protein from Haemophilus influenzae (strain ATCC 51907 / DSM 11121 / KW20 / Rd).